A 207-amino-acid chain; its full sequence is uncharacterized protein (207 aa).

Disordered regions lie at residues 1–81 and 140–169; these read MNPT…GNTR and TSQS…PPKK. Polar residues predominate over residues 21-40; sequence FEQTNSSASLTQKNSSSETE. The span at 58 to 70 shows a compositional bias: basic residues; it reads PTKRGSGRGRGRS. A compositionally biased stretch (polar residues) spans 140 to 152; that stretch reads TSQSIDAQPTPSQ. Over residues 156 to 165 the composition is skewed to basic and acidic residues; that stretch reads AHHEPHEKRG.

It is found in the nucleus. Its subcellular location is the nucleolus. This is an uncharacterized protein from Schizosaccharomyces pombe (strain 972 / ATCC 24843) (Fission yeast).